We begin with the raw amino-acid sequence, 1064 residues long: Bifunctional cytochrome P450/NADPH--P450 reductase ascE (1064 aa).

The interval 1-484 is cytochrome P450; that stretch reads MTELIPGPKG…LHGGAKKGSK (484 aa). A heme-binding site is contributed by Cys411. Positions 485-1064 are NADPH-P-450 reductase; the sequence is IDGPSSGASL…ANRYVTEIFA (580 aa). The 141-residue stretch at 504 to 644 folds into the Flavodoxin-like domain; sequence MTILYGSDSG…DFERWQDDQL (141 aa). Residues 510–514 and 588–620 contribute to the FMN site; these read SDSGT and VYGCGNKDYTSTFHRIPKLLDAEFERCGAKRIA. The 230-residue stretch at 676–905 folds into the FAD-binding FR-type domain; the sequence is VDADEATVQS…KPALRLFHPP (230 aa).

This sequence in the N-terminal section; belongs to the cytochrome P450 family. It depends on FAD as a cofactor. Requires FMN as cofactor. Heme serves as cofactor.

It carries out the reaction ilicicolin A + NADPH + O2 + H(+) = ilicicolin A epoxide + NADP(+) + H2O. It functions in the pathway secondary metabolite biosynthesis; terpenoid biosynthesis. Its function is as follows. Bifunctional cytochrome P450/NADPH--P450 reductase; part of the asc-1 gene cluster that mediates the biosynthesis both ascochlorin and ascofuranone, a strong inhibitor of cyanide-insensitive alternative oxidases and a promising drug candidate against African trypanosomiasis. The first step in the pathway is performed by the non-reducing polyketide synthase ascC that produces orsellinic acid by condensing acetyl-CoA with 3 malonyl-CoA units. Orsellinic acid is then prenylated by the prenyltransferase ascA to yield ilicicolinic acid B. Ilicicolinic acid B is further reduced to ilicicolin B by the reductase ascB. The halogenase ascD then chlorinates ilicicolin B to produce ilicicolin A which is converted to ilicicolin A epoxide by the cytochrome P450 monooxygenase ascE that catalyzes stereoselective epoxidation of the terminal double bond of the prenyl group. Ilicicolin A epoxide is the last common precursor for the biosynthesis of ascofuranone and ascochlorin. The terpene cyclase ascF produces a monocyclic terpene, and the cyclization reaction is proposed to be initiated by protonation of the terminal epoxide of ilicicolin A epoxide to generate a monocyclic tertiarycation, which is followed by a series of hydride and methyl shifts with abstraction of proton, leading to the formation of the (14S,15R,19R)-trimethylcyclohexanone ring structure of ilicicolin C, which is finally reduced to ascochlorin by the dehydrogenase ascG. On the other hand, ilicicolin A epoxide is hydroxylated by the cytochrome P450 monooxygenase ascH, and the resultant product is cyclized by the terpene cyclase ascI to ascofuranol via protonation-initiated epoxide ring opening, which facilitates the 6-endo-tet cyclization to form the tetrahy-drofuran ring. Finally, ascofuranol is oxidized into ascofuranone by ascJ. This is Bifunctional cytochrome P450/NADPH--P450 reductase ascE from Acremonium egyptiacum (Oospora egyptiaca).